The sequence spans 234 residues: Gene 53 protein (234 aa).

This Mycobacterium phage L5 (Mycobacteriophage L5) protein is Gene 53 protein (53).